The chain runs to 221 residues: Sugar transporter SWEET1 (221 aa).

The next 7 membrane-spanning stretches (helical) occupy residues 3 to 23 (AGGV…LGMF), 44 to 63 (FLPF…YGVL), 68 to 88 (TLII…LAYL), 102 to 122 (ATLL…VPDL), 129 to 149 (LGLF…ADLA), 160 to 180 (LSFS…IYGF), and 186 to 206 (YITV…VLFY). The region spanning 10-94 (FLSSACVLFT…LAYLHYSPQK (85 aa)) is the MtN3/slv 1 domain. In terms of domain architecture, MtN3/slv 2 spans 127-212 (QQLGLFCSVF…VLFYKYPPEQ (86 aa)). The interval 149 to 221 (AKIIQTKSTQ…QDTKYRLLQT (73 aa)) is mediates interaction with TRPV2.

This sequence belongs to the SWEET sugar transporter family. As to quaternary structure, interacts with TRPV2; the interaction probably occurs intracellularly and depends on TRPV2 N-glycosylation.

Its subcellular location is the golgi apparatus membrane. It localises to the cell membrane. Its function is as follows. Mediates sugar transport across membranes. May stimulate V(D)J recombination by the activation of RAG1. The sequence is that of Sugar transporter SWEET1 (Slc50a1) from Rattus norvegicus (Rat).